Here is a 371-residue protein sequence, read N- to C-terminus: Vasopressin V2 receptor (371 aa).

The disordered stretch occupies residues 1–30 (MLMASTTSAVPGHPSLPSLPSNSSQERPLD). Over 1-38 (MLMASTTSAVPGHPSLPSLPSNSSQERPLDTRDPLLAR) the chain is Extracellular. Low complexity predominate over residues 15 to 24 (SLPSLPSNSS). An N-linked (GlcNAc...) asparagine glycan is attached at Asn22. The chain crosses the membrane as a helical span at residues 39-63 (AELALLSIVFVAVALSNGLVLAALA). Residues 64–77 (RRGRRGHWAPIHVF) lie on the Cytoplasmic side of the membrane. Residues 78–98 (IGHLCLADLAVALFQVLPQLA) form a helical membrane-spanning segment. Residues 99 to 113 (WKATDRFRGPDALCR) are Extracellular-facing. The helical transmembrane segment at 114–135 (AVKYLQMVGMYASSYMILAMTL) threads the bilayer. Residues 136–159 (DRHRAICRPMLAYRHGSGAHWNRP) lie on the Cytoplasmic side of the membrane. The helical transmembrane segment at 160-180 (VLVAWAFSLLLSLPQLFIFAQ) threads the bilayer. The Extracellular portion of the chain corresponds to 181 to 200 (RNVEGGSGVTDCWACFAEPW). Residues 201–220 (GRRTYVTWIALMVFVAPTLG) form a helical membrane-spanning segment. The Cytoplasmic portion of the chain corresponds to 221 to 271 (IAACQVLIFREIHASLVPGPSERPGGRRRGRRTGSPGEGAHVSAAVAKTVR). The interval 240 to 259 (PSERPGGRRRGRRTGSPGEG) is disordered. The chain crosses the membrane as a helical span at residues 272–293 (MTLVIVVVYVLCWAPFFLVQLW). Residues 294-308 (AAWDPEAPLEGAPFV) are Extracellular-facing. A helical membrane pass occupies residues 309 to 328 (LLMLLASLNSCTNPWIYASF). Residues 329–371 (SSSVSSELRSLLCCARGRTPPSLGPQDESCTTASSSLAKDTSS) are Cytoplasmic-facing. 2 S-palmitoyl cysteine lipidation sites follow: Cys341 and Cys342. Residues 349–371 (PSLGPQDESCTTASSSLAKDTSS) are disordered. The span at 356–371 (ESCTTASSSLAKDTSS) shows a compositional bias: polar residues.

This sequence belongs to the G-protein coupled receptor 1 family. Vasopressin/oxytocin receptor subfamily. As to quaternary structure, interacts with ARRDC4. Identified in a complex containing at least ARRDC4, V2R and HGS. Interacts with TMEM147. As to expression, kidney.

It localises to the cell membrane. In terms of biological role, receptor for arginine vasopressin. The activity of this receptor is mediated by G proteins which activate adenylate cyclase. Involved in renal water reabsorption. In Homo sapiens (Human), this protein is Vasopressin V2 receptor (AVPR2).